The primary structure comprises 409 residues: Peptidase T (409 aa).

A Zn(2+)-binding site is contributed by His-78. Residue Asp-80 is part of the active site. A Zn(2+)-binding site is contributed by Asp-140. Residue Glu-173 is the Proton acceptor of the active site. Glu-174, Asp-196, and His-379 together coordinate Zn(2+).

This sequence belongs to the peptidase M20B family. It depends on Zn(2+) as a cofactor.

The protein localises to the cytoplasm. The catalysed reaction is Release of the N-terminal residue from a tripeptide.. Functionally, cleaves the N-terminal amino acid of tripeptides. The protein is Peptidase T of Salmonella agona (strain SL483).